A 298-amino-acid chain; its full sequence is N-acetylmuramic acid 6-phosphate etherase (298 aa).

In terms of domain architecture, SIS spans 54-217 (CISAIKNHGR…STVTMIKLGK (164 aa)). E82 (proton donor) is an active-site residue. The active site involves E113.

This sequence belongs to the GCKR-like family. MurNAc-6-P etherase subfamily. As to quaternary structure, homodimer.

It catalyses the reaction N-acetyl-D-muramate 6-phosphate + H2O = N-acetyl-D-glucosamine 6-phosphate + (R)-lactate. It participates in amino-sugar metabolism; N-acetylmuramate degradation. Its function is as follows. Specifically catalyzes the cleavage of the D-lactyl ether substituent of MurNAc 6-phosphate, producing GlcNAc 6-phosphate and D-lactate. The protein is N-acetylmuramic acid 6-phosphate etherase of Petrotoga mobilis (strain DSM 10674 / SJ95).